The following is a 940-amino-acid chain: Translation initiation factor IF-2 (940 aa).

Disordered regions lie at residues 48 to 264 and 278 to 351; these read ESFG…VESK and QVAE…TERK. 5 stretches are compositionally biased toward basic and acidic residues: residues 65 to 95, 112 to 125, 155 to 206, 232 to 258, and 292 to 301; these read SKPE…KEEV, FKAE…EQAA, NNER…REAA, RTSE…KFEE, and ARPDKKRDFN. A compositionally biased stretch (low complexity) spans 314–332; that stretch reads NRNSQNQVRNQRTSNWNNN. Positions 442–609 constitute a tr-type G domain; sequence ERPPVVTIMG…TVLLVAEIQE (168 aa). The G1 stretch occupies residues 451 to 458; that stretch reads GHVDHGKT. 451–458 contributes to the GTP binding site; that stretch reads GHVDHGKT. Residues 476–480 form a G2 region; the sequence is GITQH. Residues 497 to 500 form a G3 region; it reads DTPG. Residues 497 to 501 and 551 to 554 contribute to the GTP site; these read DTPGH and NKID. Positions 551–554 are G4; sequence NKID. The segment at 587–589 is G5; the sequence is SAK.

The protein belongs to the TRAFAC class translation factor GTPase superfamily. Classic translation factor GTPase family. IF-2 subfamily.

Its subcellular location is the cytoplasm. In terms of biological role, one of the essential components for the initiation of protein synthesis. Protects formylmethionyl-tRNA from spontaneous hydrolysis and promotes its binding to the 30S ribosomal subunits. Also involved in the hydrolysis of GTP during the formation of the 70S ribosomal complex. The chain is Translation initiation factor IF-2 from Streptococcus suis (strain 98HAH33).